A 233-amino-acid chain; its full sequence is 2-amino-5-formylamino-6-ribosylaminopyrimidin-4(3H)-one 5'-monophosphate deformylase (233 aa).

E33, H35, D44, and H114 together coordinate Fe cation.

It belongs to the creatininase superfamily. FAPy deformylase family. Homodimer. It depends on Fe(2+) as a cofactor. Requires Zn(2+) as cofactor.

The enzyme catalyses 2-amino-5-formylamino-6-(5-phospho-D-ribosylamino)pyrimidin-4(3H)-one + H2O = 2,5-diamino-6-(1-D-ribosylamino)pyrimidin-4(3H)-one 5'-phosphate + formate + H(+). It functions in the pathway cofactor biosynthesis; coenzyme F420 biosynthesis. It participates in cofactor biosynthesis; riboflavin biosynthesis. Catalyzes the hydrolysis of the formamide of 2-amino-5-formylamino-6-ribosylamino-4(3H)-pyrimidinone 5'-monophosphate (FAPy) to form 2,5-diamino-6-ribosylamino-4(3H)-pyrimidinone 5'-phosphate (APy). In Methanosphaera stadtmanae (strain ATCC 43021 / DSM 3091 / JCM 11832 / MCB-3), this protein is 2-amino-5-formylamino-6-ribosylaminopyrimidin-4(3H)-one 5'-monophosphate deformylase.